Here is a 149-residue protein sequence, read N- to C-terminus: Nascent polypeptide-associated complex subunit beta-2 (149 aa).

In terms of domain architecture, NAC-A/B spans 38–103; it reads DKDNTKLQAE…PKENTLNGLY (66 aa).

It belongs to the NAC-beta family. Part of the nascent polypeptide-associated complex (NAC), consisting of EGD2 and either EGD1 or BTT1. NAC associates with ribosomes via EGD1 or BTT1.

The protein localises to the cytoplasm. Its subcellular location is the nucleus. Functionally, acts as a component of the nascent polypeptide-associated complex (NAC), which promotes mitochondrial protein import by enhancing productive ribosome interactions with the outer mitochondrial membrane. Also blocks the inappropriate interaction of ribosomes translating non-secretory nascent polypeptides with translocation sites in the membrane of the endoplasmic reticulum. BTT1 may act as a transcription factor that exert a negative effect on the expression of several genes that are transcribed by RNA polymerase II. The protein is Nascent polypeptide-associated complex subunit beta-2 (BTT1) of Saccharomyces cerevisiae (strain YJM789) (Baker's yeast).